The sequence spans 81 residues: MHKVQSLQDPFLNVLRRERVPVFIYLINGIKLQGEIESFDKFVILLRNTVNQMIYKHAISTIVPSRVVSYYVGRAGNHTTF.

Positions 9–68 (DPFLNVLRRERVPVFIYLINGIKLQGEIESFDKFVILLRNTVNQMIYKHAISTIVPSRVV) constitute a Sm domain.

It belongs to the Hfq family. Homohexamer.

RNA chaperone that binds small regulatory RNA (sRNAs) and mRNAs to facilitate mRNA translational regulation in response to envelope stress, environmental stress and changes in metabolite concentrations. Also binds with high specificity to tRNAs. The polypeptide is RNA-binding protein Hfq (Blochmanniella pennsylvanica (strain BPEN)).